A 192-amino-acid chain; its full sequence is Ion-translocating oxidoreductase complex subunit B (192 aa).

The tract at residues 1–26 is hydrophobic; it reads MNAIWIAVAAVSLLGLAFGAILGYAS. The 60-residue stretch at 32 to 91 folds into the 4Fe-4S domain; the sequence is EDDPVVEKIDEILPQSQCGQCGYPGCRPYAETISCNGEKINRCAPGGEAVMLKIAELLNV. [4Fe-4S] cluster contacts are provided by Cys-49, Cys-52, Cys-57, Cys-74, Cys-117, Cys-120, Cys-123, Cys-127, Cys-147, Cys-150, Cys-153, and Cys-157. 2 consecutive 4Fe-4S ferredoxin-type domains span residues 108-137 and 138-167; these read MVAV…GATR and AMHT…LQPV.

The protein belongs to the 4Fe4S bacterial-type ferredoxin family. RnfB subfamily. In terms of assembly, the complex is composed of six subunits: RsxA, RsxB, RsxC, RsxD, RsxE and RsxG. [4Fe-4S] cluster is required as a cofactor.

It is found in the cell inner membrane. In terms of biological role, part of a membrane-bound complex that couples electron transfer with translocation of ions across the membrane. Required to maintain the reduced state of SoxR. This Escherichia coli O6:K15:H31 (strain 536 / UPEC) protein is Ion-translocating oxidoreductase complex subunit B.